Reading from the N-terminus, the 62-residue chain is MARKKFSGLEIXLIVLFAIVLSIAIALVVVXASKXPAVIKLPSDPIPTLRMEMTYHTDYMLE.

Over 2–12 (ARKKFSGLEIX) the chain is Cytoplasmic. Residue Ser7 is modified to Phosphoserine; by PKA. Residues 13-32 (LIVLFAIVLSIAIALVVVXA) form a helical; Signal-anchor for type II membrane protein membrane-spanning segment. At 33 to 38 (SKXPAV) the chain is on the lumenal side. Tyr59 carries the post-translational modification Sulfotyrosine.

This sequence belongs to the glycosyl hydrolase 31 family. In terms of assembly, the resulting sucrase and isomaltase subunits stay associated with one another in a complex by non-covalent linkages. In terms of processing, the precursor is proteolytically cleaved when exposed to pancreatic proteases in the intestinal lumen. Post-translationally, sulfated.

The protein resides in the apical cell membrane. It carries out the reaction Hydrolysis of sucrose and maltose by an alpha-D-glucosidase-type action.. It catalyses the reaction Hydrolysis of (1-&gt;6)-alpha-D-glucosidic linkages in some oligosaccharides produced from starch and glycogen by alpha-amylase, and in isomaltose.. Its function is as follows. Plays an important role in the final stage of carbohydrate digestion. Isomaltase activity is specific for both alpha-1,4- and alpha-1,6-oligosaccharides. This chain is Sucrase-isomaltase, intestinal (SI), found in Sus scrofa (Pig).